A 429-amino-acid chain; its full sequence is Histidinol dehydrogenase (429 aa).

NAD(+) contacts are provided by Y130, Q191, and N214. The substrate site is built by S237, Q259, and H262. Zn(2+) is bound by residues Q259 and H262. Catalysis depends on proton acceptor residues E327 and H328. Substrate contacts are provided by H328, D361, E415, and H420. Zn(2+) is bound at residue D361. Zn(2+) is bound at residue H420.

It belongs to the histidinol dehydrogenase family. It depends on Zn(2+) as a cofactor.

It carries out the reaction L-histidinol + 2 NAD(+) + H2O = L-histidine + 2 NADH + 3 H(+). It participates in amino-acid biosynthesis; L-histidine biosynthesis; L-histidine from 5-phospho-alpha-D-ribose 1-diphosphate: step 9/9. Functionally, catalyzes the sequential NAD-dependent oxidations of L-histidinol to L-histidinaldehyde and then to L-histidine. In Geobacter sulfurreducens (strain ATCC 51573 / DSM 12127 / PCA), this protein is Histidinol dehydrogenase.